Reading from the N-terminus, the 952-residue chain is Protein translocase subunit SecA (952 aa).

Residues glutamine 135, 153-157, and aspartate 575 contribute to the ATP site; that span reads GEGKT. Residues 614 to 624 are compositionally biased toward basic and acidic residues; that stretch reads RHESRRIDNQL. 2 disordered regions span residues 614–636 and 916–946; these read RHESRRIDNQLRGRSGRQGDPGS and VSAKAATQSTTPAAKEIGRNDPCPCGSGKKY. Residues cysteine 938, cysteine 940, cysteine 949, and cysteine 950 each coordinate Zn(2+).

This sequence belongs to the SecA family. In terms of assembly, monomer and homodimer. Part of the essential Sec protein translocation apparatus which comprises SecA, SecYEG and auxiliary proteins SecDF. Other proteins may also be involved. Requires Zn(2+) as cofactor.

It is found in the cell membrane. The protein localises to the cytoplasm. It catalyses the reaction ATP + H2O + cellular proteinSide 1 = ADP + phosphate + cellular proteinSide 2.. Its function is as follows. Part of the Sec protein translocase complex. Interacts with the SecYEG preprotein conducting channel. Has a central role in coupling the hydrolysis of ATP to the transfer of proteins into and across the cell membrane, serving as an ATP-driven molecular motor driving the stepwise translocation of polypeptide chains across the membrane. This chain is Protein translocase subunit SecA, found in Dehalococcoides mccartyi (strain ATCC BAA-2100 / JCM 16839 / KCTC 5957 / BAV1).